A 254-amino-acid polypeptide reads, in one-letter code: N-acetylglucosamine-induced protein 1 (254 aa).

The protein localises to the cytoplasm. In terms of biological role, N-acetylglucosamine-induced protein which plays a role in the N-acetylglucosamine metabolic pathway. The chain is N-acetylglucosamine-induced protein 1 from Candida albicans (strain SC5314 / ATCC MYA-2876) (Yeast).